The primary structure comprises 340 residues: Ephrin-B3 (340 aa).

The N-terminal stretch at 1-27 is a signal peptide; the sequence is MGAPHFGPGGVQVGALLLLGFAGLVSG. An Ephrin RBD domain is found at 28 to 167; that stretch reads LSLEPVYWNS…TRGMKVLLRV (140 aa). The Extracellular segment spans residues 28-227; sequence LSLEPVYWNS…GPLPPPSMPA (200 aa). Disulfide bonds link Cys62–Cys104 and Cys92–Cys156. The segment at 168–227 is disordered; the sequence is GQSPRGGAVPRKPVSEMPMERDRGAAHSAEPGRDTIPGDPSSNATSRGAEGPLPPPSMPA. The segment covering 185-200 has biased composition (basic and acidic residues); sequence PMERDRGAAHSAEPGR. The N-linked (GlcNAc...) asparagine glycan is linked to Asn210. A helical membrane pass occupies residues 228-248; sequence VAGAAGGMALLLLGVAGAGGA. Over 249 to 340 the chain is Cytoplasmic; that stretch reads MCWRRRRAKP…QSPPNIYYKV (92 aa). A disordered region spans residues 254-300; that stretch reads RRAKPSESRHPGPGSFGRGGSLGLGGGGGMGPREAEPGELGIALRGG. The span at 267 to 284 shows a compositional bias: gly residues; it reads GSFGRGGSLGLGGGGGMG. Position 271 is an omega-N-methylarginine (Arg271). Phosphoserine is present on Ser274. The short motif at 338-340 is the PDZ-binding element; sequence YKV.

This sequence belongs to the ephrin family. Interacts with GRIP1 and GRIP2. As to expression, expressed on lateral floor plate cells, specifically on commissural axon segments that have passed through the floor plate. Expressed in cells of the retinal ganglion cell layer during retinal axon guidance to the optic disk. Expressed in myogenic progenitor cells.

The protein localises to the membrane. Its function is as follows. Cell surface transmembrane ligand for Eph receptors, a family of receptor tyrosine kinases which are crucial for migration, repulsion and adhesion during neuronal, vascular and epithelial development. Binds promiscuously Eph receptors residing on adjacent cells, leading to contact-dependent bidirectional signaling into neighboring cells. The signaling pathway downstream of the receptor is referred to as forward signaling while the signaling pathway downstream of the ephrin ligand is referred to as reverse signaling. May play a pivotal role in forebrain function. Binds to, and induce the collapse of, commissural axons/growth cones in vitro. May play a role in constraining the orientation of longitudinally projecting axons. The protein is Ephrin-B3 (Efnb3) of Mus musculus (Mouse).